The chain runs to 66 residues: Large ribosomal subunit protein bL35 (66 aa).

This sequence belongs to the bacterial ribosomal protein bL35 family.

The sequence is that of Large ribosomal subunit protein bL35 from Phenylobacterium zucineum (strain HLK1).